The following is a 440-amino-acid chain: Ribosomal protein uS12 methylthiotransferase RimO (440 aa).

Residues 7 to 117 (PKISFVSLGC…VLDAVHRALP (111 aa)) form the MTTase N-terminal domain. Cys-16, Cys-52, Cys-81, Cys-148, Cys-152, and Cys-155 together coordinate [4Fe-4S] cluster. One can recognise a Radical SAM core domain in the interval 134-370 (LTPRHYAYLK…MARQQKISAQ (237 aa)). Residues 373-439 (KRKVGTRQQV…EYDLHGSVAG (67 aa)) enclose the TRAM domain.

It belongs to the methylthiotransferase family. RimO subfamily. [4Fe-4S] cluster serves as cofactor.

It is found in the cytoplasm. The enzyme catalyses L-aspartate(89)-[ribosomal protein uS12]-hydrogen + (sulfur carrier)-SH + AH2 + 2 S-adenosyl-L-methionine = 3-methylsulfanyl-L-aspartate(89)-[ribosomal protein uS12]-hydrogen + (sulfur carrier)-H + 5'-deoxyadenosine + L-methionine + A + S-adenosyl-L-homocysteine + 2 H(+). Catalyzes the methylthiolation of an aspartic acid residue of ribosomal protein uS12. In Afipia carboxidovorans (strain ATCC 49405 / DSM 1227 / KCTC 32145 / OM5) (Oligotropha carboxidovorans), this protein is Ribosomal protein uS12 methylthiotransferase RimO.